Reading from the N-terminus, the 243-residue chain is Aquaporin SIP1-2 (243 aa).

Helical transmembrane passes span 9–29 (AAAADAVVTFLWVLCVSTLGA) and 45–65 (FALLVTVSLLSVLLFVFNILC). Positions 74 to 76 (NPT) match the NPA 1 motif. Helical transmembrane passes span 98-118 (LPAQAAGAVGGALAISELMPA), 136-156 (GAGAELVLTFVITLAVLLIIV), and 163-183 (IIKTWMISICTLCLVLSGAAY). The NPA 2 motif lies at 189 to 191 (NPA). Residues 211–231 (VYWICPFIGAILAAWIFRAMF) form a helical membrane-spanning segment.

It belongs to the MIP/aquaporin (TC 1.A.8) family. SIP (TC 1.A.8.10) subfamily.

Its subcellular location is the membrane. Aquaporins facilitate the transport of water and small neutral solutes across cell membranes. This chain is Aquaporin SIP1-2 (SIP1-2), found in Zea mays (Maize).